The sequence spans 262 residues: Probable cutinase 1 (262 aa).

The signal sequence occupies residues 1 to 19 (MAPLKSLLLGASLATLALS). Disulfide bonds link C48-C127 and C74-C88. The active-site Nucleophile is S138. An intrachain disulfide couples C189 to C196. D193 is a catalytic residue. H206 acts as the Proton donor/acceptor in catalysis. The segment at 228–262 (SSSTTSSSSDAASSSSAAGTSSSGLSGLSSFFGGL) is disordered.

Belongs to the cutinase family.

It localises to the secreted. The enzyme catalyses cutin + H2O = cutin monomers.. Catalyzes the hydrolysis of complex carboxylic polyesters found in the cell wall of plants. Degrades cutin, a macromolecule that forms the structure of the plant cuticle. The protein is Probable cutinase 1 of Aspergillus niger (strain ATCC MYA-4892 / CBS 513.88 / FGSC A1513).